The sequence spans 546 residues: CTP synthase (546 aa).

The tract at residues 1–266 (MAKYYIFITG…DSYVCDRFCI (266 aa)) is amidoligase domain. Ser14 serves as a coordination point for CTP. Ser14 is a binding site for UTP. Residues 15–20 (SLGKGI) and Asp72 contribute to the ATP site. Residues Asp72 and Glu140 each contribute to the Mg(2+) site. CTP contacts are provided by residues 147–149 (DIE), 187–192 (KTKPTQ), and Lys223. Residues 187–192 (KTKPTQ) and Lys223 each bind UTP. Residues 291–544 (NIGIIGKYTE…VKAAFDFKNK (254 aa)) form the Glutamine amidotransferase type-1 domain. Gly352 contacts L-glutamine. The Nucleophile; for glutamine hydrolysis role is filled by Cys379. Residues 380–383 (LGMQ), Glu403, and Arg470 each bind L-glutamine. Residues His517 and Glu519 contribute to the active site.

It belongs to the CTP synthase family. In terms of assembly, homotetramer.

It catalyses the reaction UTP + L-glutamine + ATP + H2O = CTP + L-glutamate + ADP + phosphate + 2 H(+). It carries out the reaction L-glutamine + H2O = L-glutamate + NH4(+). The catalysed reaction is UTP + NH4(+) + ATP = CTP + ADP + phosphate + 2 H(+). It functions in the pathway pyrimidine metabolism; CTP biosynthesis via de novo pathway; CTP from UDP: step 2/2. With respect to regulation, allosterically activated by GTP, when glutamine is the substrate; GTP has no effect on the reaction when ammonia is the substrate. The allosteric effector GTP functions by stabilizing the protein conformation that binds the tetrahedral intermediate(s) formed during glutamine hydrolysis. Inhibited by the product CTP, via allosteric rather than competitive inhibition. Functionally, catalyzes the ATP-dependent amination of UTP to CTP with either L-glutamine or ammonia as the source of nitrogen. Regulates intracellular CTP levels through interactions with the four ribonucleotide triphosphates. The sequence is that of CTP synthase from Wigglesworthia glossinidia brevipalpis.